A 370-amino-acid chain; its full sequence is Putative glutamate--cysteine ligase 2 (370 aa).

The protein belongs to the glutamate--cysteine ligase type 2 family. YbdK subfamily.

The enzyme catalyses L-cysteine + L-glutamate + ATP = gamma-L-glutamyl-L-cysteine + ADP + phosphate + H(+). ATP-dependent carboxylate-amine ligase which exhibits weak glutamate--cysteine ligase activity. The sequence is that of Putative glutamate--cysteine ligase 2 from Herminiimonas arsenicoxydans.